The sequence spans 466 residues: uncharacterized protein (466 aa).

The 289-residue stretch at 178-466 (SQGSASSMWM…QGMLGVKYSW (289 aa)) folds into the Autotransporter domain.

This is an uncharacterized protein from Escherichia coli (strain K12).